Consider the following 750-residue polypeptide: Protein O-mannosyl-transferase 2 (750 aa).

The tract at residues 1-23 (MPPATGGGLAESELRPRRGRCGP) is disordered. At Ser-41 the chain carries Phosphoserine. Residues 54-74 (AVGWWALLALVTLLSFATRFH) traverse the membrane as a helical segment. Asn-98 carries N-linked (GlcNAc...) asparagine glycosylation. A run of 5 helical transmembrane segments spans residues 100–120 (TFFF…AGYL), 146–166 (GFCA…VLDL), 191–211 (QYIL…LSMV), 231–251 (LTGV…FIIL), and 283–303 (VLCL…VHFM). Asn-330 carries an N-linked (GlcNAc...) asparagine glycan. MIR domains lie at 334–390 (PEHL…IKKH), 403–459 (VEFV…IEVV), and 464–521 (GNRI…VEDH). A glycan (N-linked (GlcNAc...) asparagine) is linked at Asn-445. N-linked (GlcNAc...) asparagine glycans are attached at residues Asn-528 and Asn-583. 4 consecutive transmembrane segments (helical) span residues 596–616 (VVWW…SIIA), 643–663 (VLLG…VLYF), 665–685 (HYFP…DTLL), and 700–720 (GIHV…FYLF).

Belongs to the glycosyltransferase 39 family. In terms of assembly, interacts with POMT1. N-glycosylated. In terms of tissue distribution, highly expressed in testis; detected at low levels in most tissues.

It is found in the endoplasmic reticulum membrane. The catalysed reaction is a di-trans,poly-cis-dolichyl beta-D-mannosyl phosphate + L-seryl-[protein] = 3-O-(alpha-D-mannosyl)-L-seryl-[protein] + a di-trans,poly-cis-dolichyl phosphate + H(+). It catalyses the reaction a di-trans,poly-cis-dolichyl beta-D-mannosyl phosphate + L-threonyl-[protein] = 3-O-(alpha-D-mannosyl)-L-threonyl-[protein] + a di-trans,poly-cis-dolichyl phosphate + H(+). It functions in the pathway protein modification; protein glycosylation. With respect to regulation, slightly activated by Mg(2+) and inhibited by both Ca(+) and Mn(2+). EDTA ha no effect on activity in vitro. Functionally, transfers mannosyl residues to the hydroxyl group of serine or threonine residues. Coexpression of both POMT1 and POMT2 is necessary for enzyme activity, expression of either POMT1 or POMT2 alone is insufficient. Essentially dedicated to O-mannosylation of alpha-DAG1 and few other proteins but not of cadherins and protocaherins. This chain is Protein O-mannosyl-transferase 2 (POMT2), found in Homo sapiens (Human).